Here is a 143-residue protein sequence, read N- to C-terminus: Transcriptional regulator MraZ (143 aa).

SpoVT-AbrB domains are found at residues 5–47 (EYQH…PKEE) and 76–119 (AGEC…SRER).

It belongs to the MraZ family. Forms oligomers.

Its subcellular location is the cytoplasm. It localises to the nucleoid. This is Transcriptional regulator MraZ from Heliobacterium modesticaldum (strain ATCC 51547 / Ice1).